Here is a 484-residue protein sequence, read N- to C-terminus: PTS system MurNAc-GlcNAc-specific EIIBC component (484 aa).

A PTS EIIB type-1 domain is found at 5 to 87; sequence QQLAERIIAA…AELSGVKLGD (83 aa). Cys-27 acts as the Phosphocysteine intermediate; for EIIB activity in catalysis. A PTS EIIC type-1 domain is found at 130-484; that stretch reads KSIANIFIPL…AMRQTDLLGD (355 aa). 10 consecutive transmembrane segments (helical) span residues 135 to 155, 160 to 180, 200 to 220, 234 to 254, 274 to 294, 305 to 325, 349 to 369, 384 to 404, 408 to 428, and 450 to 470; these read IFIPLIPAFIGAGLIGGIAAV, MVAGYISGAWITQLITVFNVI, FGATPGLGGVIGGTTLLTGIA, LQPGQGGIIGVIFAVWILSIV, IALLIVGLLTIFIFMPLAGFV, IISIGGVFSGFIIGASFLPLV, LLPIAAMAGAGQVGAALALWV, ALPVGFLGIGEPLIYGVTLPL, FLTACIGGGIGGAVIGGIGHI, and LGYIAGLLAAYAGGFVCTYLF.

The protein localises to the cell membrane. It carries out the reaction N-acetyl-beta-D-muramate-(1-&gt;4)-N-acetyl-D-glucosamine(out) + N(pros)-phospho-L-histidyl-[protein] = 6-phospho-N-acetyl-beta-D-muramate-(1-&gt;4)-N-acetyl-D-glucosamine(in) + L-histidyl-[protein]. Its pathway is cell wall biogenesis; peptidoglycan recycling. The phosphoenolpyruvate-dependent sugar phosphotransferase system (sugar PTS), a major carbohydrate active transport system, catalyzes the phosphorylation of incoming sugar substrates concomitantly with their translocation across the cell membrane. This system is involved in the uptake and phosphorylation of MurNAc-GlcNAc, the principle peptidoglycan turnover product of S.aureus, yielding cytoplasmic MurNAc 6P-GlcNAc. This Staphylococcus aureus (strain Mu50 / ATCC 700699) protein is PTS system MurNAc-GlcNAc-specific EIIBC component.